A 611-amino-acid polypeptide reads, in one-letter code: MEESETVLKLRLQLKEAEEERIKAAQYGLELLESQSDLQNQLEEQRNEMTSTIENLEQEKYSLQREVELKNRMLESLTSECENIRQQQKLCLEQLQEQLERNHHRELSEIKDKLEKLKAELDEARLSEKQLKHKLEYQSEVLANKSEELRMMSERVHETMSSEMLTLQLEKTELESAKANLEQEVNELQYREQQLLLTNGTQSRQLERLQDEKEDREKEAVGYFKALEKAREANQDLQAQLDIALQQAQDPNSKGNSLFAEVEDRRAEMERQLISMKVQFQSLQKQHAFSRQQMHRMKVQIATLLQLKGSQSDPEQLERLQAMVAQKNSEFETLVMKVRQLEKSQQICENGPVANSSDGLGQGDETYYVDLLKMKLVNSSKEIEKIKDELSLQRMKALAESQRVLDLERKLFANDRHLKLSQGENMKLRVNLDEMKMKYEPDEIAKIRTQKRRKEQLPLDCAIDNTSATVTSGSQAHGLSDAIPEDMCPAESTVHRNLLKEDSSLSTKEQDLSSVAVKPIEPANGQPPKERKRVRIVENENDNQDINKRNTNNCSVTSTSPRSASEESTSESKRFDEEQEKRKQERKSRLRAPPVLHVPSKPAATTQCPQQ.

A coiled-coil region spans residues 1 to 288; the sequence is MEESETVLKL…QFQSLQKQHA (288 aa). The span at 499–511 shows a compositional bias: basic and acidic residues; it reads LKEDSSLSTKEQD. Residues 499 to 611 are disordered; the sequence is LKEDSSLSTK…PAATTQCPQQ (113 aa). Polar residues predominate over residues 549–567; the sequence is RNTNNCSVTSTSPRSASEE. A compositionally biased stretch (basic and acidic residues) spans 570–583; the sequence is SESKRFDEEQEKRK.

The protein belongs to the Spindly family.

The protein resides in the chromosome. It is found in the centromere. It localises to the kinetochore. In terms of biological role, required for the localization of dynein and dynactin to the mitotic kintochore. Dynein is believed to control the initial lateral interaction between the kinetochore and spindle microtubules and to facilitate the subsequent formation of end-on kinetochore-microtubule attachments mediated by the NDC80 complex. May act as an adapter protein linking the dynein motor complex to various cargos. The polypeptide is Protein Spindly (spdl1) (Xenopus tropicalis (Western clawed frog)).